Consider the following 267-residue polypeptide: L-aspartate dehydrogenase (267 aa).

The NAD(+) site is built by Ala124 and Asn190. Residue His220 is part of the active site.

Belongs to the L-aspartate dehydrogenase family.

The enzyme catalyses L-aspartate + NADP(+) + H2O = oxaloacetate + NH4(+) + NADPH + H(+). It carries out the reaction L-aspartate + NAD(+) + H2O = oxaloacetate + NH4(+) + NADH + H(+). The protein operates within cofactor biosynthesis; NAD(+) biosynthesis; iminoaspartate from L-aspartate (dehydrogenase route): step 1/1. Specifically catalyzes the NAD or NADP-dependent dehydrogenation of L-aspartate to iminoaspartate. This chain is L-aspartate dehydrogenase, found in Polaromonas sp. (strain JS666 / ATCC BAA-500).